We begin with the raw amino-acid sequence, 977 residues long: Leucine--tRNA ligase (977 aa).

The 'HIGH' region motif lies at proline 11–histidine 21. An insert region spans residues valine 220 to glutamine 318. Residues lysine 699–serine 703 carry the 'KMSKS' region motif. ATP is bound at residue lysine 702.

It belongs to the class-I aminoacyl-tRNA synthetase family.

It is found in the cytoplasm. The catalysed reaction is tRNA(Leu) + L-leucine + ATP = L-leucyl-tRNA(Leu) + AMP + diphosphate. The polypeptide is Leucine--tRNA ligase (leuS) (Nanoarchaeum equitans (strain Kin4-M)).